The primary structure comprises 716 residues: Beta-galactosidase (716 aa).

E389 acts as the Proton donor in catalysis. E462 functions as the Nucleophile in the catalytic mechanism.

Belongs to the glycosyl hydrolase 2 family. Homodimer.

The catalysed reaction is Hydrolysis of terminal non-reducing beta-D-galactose residues in beta-D-galactosides.. Functionally, displays beta-galactosidase activity with the artificial chromogenic substrate o-nitrophenyl-beta-D-galactopyranoside (ONPG). The polypeptide is Beta-galactosidase (Thermoanaerobacterium thermosulfurigenes (Clostridium thermosulfurogenes)).